The primary structure comprises 583 residues: R-linalool synthase QH5, chloroplastic (583 aa).

A chloroplast-targeting transit peptide spans 1–40; it reads MASISLFPYSILKQTSPLARGTAYNRIYSTKTTGITVDVA. Residues arginine 298, aspartate 335, aspartate 339, arginine 476, and aspartate 479 each contribute to the (2E)-geranyl diphosphate site. Residues aspartate 335 and aspartate 339 each coordinate Mg(2+). A DDXXD motif motif is present at residues 335-339; that stretch reads DDVYD. 3 residues coordinate Mg(2+): aspartate 479, threonine 483, and glutamate 487. K(+) is bound at residue aspartate 492.

This sequence belongs to the terpene synthase family. Tpsb subfamily. Requires Mg(2+) as cofactor. Mn(2+) serves as cofactor. It depends on K(+) as a cofactor. As to expression, expressed in every aerial organ except for the stem stele of mature plants. Not detected in roots.

It is found in the plastid. The protein localises to the chloroplast. The enzyme catalyses (2E)-geranyl diphosphate + H2O = (R)-linalool + diphosphate. It participates in secondary metabolite biosynthesis; terpenoid biosynthesis. Monoterpene synthase that catalyzes the formation of (3R)-linalool from geranyl diphosphate, but not from isopentenyl diphosphate, dimethylallyl diphosphate, chrysanthemyl diphosphate, farnesyl diphosphate, (+)-copalyl diphosphate or geranylgeranyl diphosphate. The protein is R-linalool synthase QH5, chloroplastic of Artemisia annua (Sweet wormwood).